The following is a 264-amino-acid chain: Thiazole synthase (264 aa).

The Schiff-base intermediate with DXP role is filled by Lys-106. Residues Gly-167, Ala-193–Gly-194, and Asn-215–Thr-216 each bind 1-deoxy-D-xylulose 5-phosphate.

This sequence belongs to the ThiG family. In terms of assembly, homotetramer. Forms heterodimers with either ThiH or ThiS.

The protein localises to the cytoplasm. The enzyme catalyses [ThiS sulfur-carrier protein]-C-terminal-Gly-aminoethanethioate + 2-iminoacetate + 1-deoxy-D-xylulose 5-phosphate = [ThiS sulfur-carrier protein]-C-terminal Gly-Gly + 2-[(2R,5Z)-2-carboxy-4-methylthiazol-5(2H)-ylidene]ethyl phosphate + 2 H2O + H(+). Its pathway is cofactor biosynthesis; thiamine diphosphate biosynthesis. Catalyzes the rearrangement of 1-deoxy-D-xylulose 5-phosphate (DXP) to produce the thiazole phosphate moiety of thiamine. Sulfur is provided by the thiocarboxylate moiety of the carrier protein ThiS. In vitro, sulfur can be provided by H(2)S. The polypeptide is Thiazole synthase (Xanthomonas euvesicatoria pv. vesicatoria (strain 85-10) (Xanthomonas campestris pv. vesicatoria)).